We begin with the raw amino-acid sequence, 162 residues long: Disulfide bond formation protein B (162 aa).

Residues 1 to 4 are Cytoplasmic-facing; the sequence is MRII. The helical transmembrane segment at 5–21 threads the bilayer; that stretch reads FLLIFLACAGLIGYALY. Topologically, residues 22–39 are periplasmic; sequence LQLMDGLLPCPLCIFQRI. A disulfide bridge links C31 with C34. Residues 40–56 form a helical membrane-spanning segment; the sequence is AYWLIGITALFTFIHNP. Residues 57–62 lie on the Cytoplasmic side of the membrane; the sequence is QSLGQH. A helical transmembrane segment spans residues 63-80; sequence IYYGLIILFSLAGAIVAG. Residues 81-136 lie on the Periplasmic side of the membrane; it reads RQAWLIRFPEAFECGISPEEAFLNGLPLAQWWPNMFEANGDCNDGTWQFLSLTLPD. Cysteines 94 and 122 form a disulfide. Residues 137-155 form a helical membrane-spanning segment; it reads WSLLIFAAFGIIAGLLWHK. At 156–162 the chain is on the cytoplasmic side; that stretch reads KYNSINQ.

It belongs to the DsbB family.

It is found in the cell inner membrane. Required for disulfide bond formation in some periplasmic proteins. Acts by oxidizing the DsbA protein. In Nitrosomonas eutropha (strain DSM 101675 / C91 / Nm57), this protein is Disulfide bond formation protein B.